Consider the following 276-residue polypeptide: 5-deoxy-glucuronate isomerase (276 aa).

The protein belongs to the isomerase IolB family.

The enzyme catalyses 5-deoxy-D-glucuronate = 5-dehydro-2-deoxy-D-gluconate. It participates in polyol metabolism; myo-inositol degradation into acetyl-CoA; acetyl-CoA from myo-inositol: step 4/7. Involved in the isomerization of 5-deoxy-glucuronate (5DG) to 5-dehydro-2-deoxy-D-gluconate (DKG or 2-deoxy-5-keto-D-gluconate). The sequence is that of 5-deoxy-glucuronate isomerase from Geobacillus kaustophilus (strain HTA426).